We begin with the raw amino-acid sequence, 1193 residues long: Nucleolar protein 6 (1193 aa).

2 disordered regions span residues 1-69 (MRFV…TKNV) and 1137-1193 (KREQ…KVLK). 2 stretches are compositionally biased toward basic and acidic residues: residues 31 to 46 (AGDH…KIAK) and 1151 to 1161 (DANKAEEESKP). Phosphoserine is present on Ser-35. A compositionally biased stretch (basic residues) spans 1162-1184 (KPKKHRQRKGTGKKALPKRKRLI).

It belongs to the NRAP family. In terms of assembly, part of the small subunit (SSU) processome, composed of more than 70 proteins and the RNA chaperone small nucleolar RNA (snoRNA) U3. In terms of tissue distribution, expressed in nurse cells at stages 9-10 of oogenesis and exported to the oocyte.

The protein localises to the nucleus. It localises to the nucleolus. It is found in the chromosome. Part of the small subunit (SSU) processome, first precursor of the small eukaryotic ribosomal subunit. During the assembly of the SSU processome in the nucleolus, many ribosome biogenesis factors, an RNA chaperone and ribosomal proteins associate with the nascent pre-rRNA and work in concert to generate RNA folding, modifications, rearrangements and cleavage as well as targeted degradation of pre-ribosomal RNA by the RNA exosome. The polypeptide is Nucleolar protein 6 (Drosophila melanogaster (Fruit fly)).